The chain runs to 366 residues: Chorismate synthase (366 aa).

Arg46 contacts NADP(+). Residues 122–124, 243–244, Gly284, 299–303, and Arg325 contribute to the FMN site; these read RSS, NG, and KPTPS.

The protein belongs to the chorismate synthase family. As to quaternary structure, homotetramer. FMNH2 serves as cofactor.

It carries out the reaction 5-O-(1-carboxyvinyl)-3-phosphoshikimate = chorismate + phosphate. Its pathway is metabolic intermediate biosynthesis; chorismate biosynthesis; chorismate from D-erythrose 4-phosphate and phosphoenolpyruvate: step 7/7. Functionally, catalyzes the anti-1,4-elimination of the C-3 phosphate and the C-6 proR hydrogen from 5-enolpyruvylshikimate-3-phosphate (EPSP) to yield chorismate, which is the branch point compound that serves as the starting substrate for the three terminal pathways of aromatic amino acid biosynthesis. This reaction introduces a second double bond into the aromatic ring system. The sequence is that of Chorismate synthase from Campylobacter hominis (strain ATCC BAA-381 / DSM 21671 / CCUG 45161 / LMG 19568 / NCTC 13146 / CH001A).